The chain runs to 82 residues: U1-plectoxin-Pt1a (82 aa).

The N-terminal stretch at 1–20 (MKHLIFSSALVCALVVCTFA) is a signal peptide. The propeptide occupies 21-33 (EEQVNVPFLPDER). 5 cysteine pairs are disulfide-bonded: Cys37–Cys51, Cys44–Cys57, Cys50–Cys68, Cys54–Cys77, and Cys59–Cys66. Ser79 is lipidated: O-palmitoyl serine. The propeptide occupies 80 to 82 (RRR).

Belongs to the neurotoxin 02 (plectoxin) family. 02 (plectoxin) subfamily. In terms of processing, plectoxin-5 presumably undergoes post-translational modification to give rise to plectoxin-6. In terms of tissue distribution, expressed by the venom gland.

The protein localises to the secreted. Its function is as follows. Potent toxin that may paralyze and/or kill insect pests such as H.virescens (lepidoptera), S.exigua (beet armyworm) and M.sexta (tobacco hornworm). The polypeptide is U1-plectoxin-Pt1a (Plectreurys tristis (Spider)).